We begin with the raw amino-acid sequence, 222 residues long: Ribosomal RNA large subunit methyltransferase E (222 aa).

Residues 1-13 are compositionally biased toward basic and acidic residues; that stretch reads MSRSDKNPHERLK. The segment at 1–22 is disordered; the sequence is MSRSDKNPHERLKTAKKRTASS. S-adenosyl-L-methionine is bound by residues Gly75, Trp77, Asp94, Asp110, and Asp134. Residue Lys174 is the Proton acceptor of the active site.

It belongs to the class I-like SAM-binding methyltransferase superfamily. RNA methyltransferase RlmE family.

The protein localises to the cytoplasm. It carries out the reaction uridine(2552) in 23S rRNA + S-adenosyl-L-methionine = 2'-O-methyluridine(2552) in 23S rRNA + S-adenosyl-L-homocysteine + H(+). In terms of biological role, specifically methylates the uridine in position 2552 of 23S rRNA at the 2'-O position of the ribose in the fully assembled 50S ribosomal subunit. The protein is Ribosomal RNA large subunit methyltransferase E of Novosphingobium aromaticivorans (strain ATCC 700278 / DSM 12444 / CCUG 56034 / CIP 105152 / NBRC 16084 / F199).